Here is a 962-residue protein sequence, read N- to C-terminus: Translation initiation factor IF-2 (962 aa).

The tract at residues 99–365 is disordered; it reads VKAAQTQAAP…GKKGKKLKLE (267 aa). A compositionally biased stretch (basic and acidic residues) spans 117 to 141; it reads DAAKARAEAAARAEARAKAEAEAAK. The segment covering 145-155 has biased composition (low complexity); the sequence is AKAGNKAKPAA. Residues 173–216 show a composition bias toward basic and acidic residues; that stretch reads KPAEESKAEKAQADKMPSKKPAEPKEKAAKPKHERNGKGKDAKK. The segment covering 219 to 234 has biased composition (low complexity); that stretch reads KPAAPAVPQPVVSAEE. A compositionally biased stretch (basic and acidic residues) spans 235-269; that stretch reads QAQRDEEARRAAALRAHQEALLKEKQERQARREAM. The span at 270–283 shows a compositional bias: low complexity; sequence KQQAEQQAKAAQEA. Over residues 338–354 the composition is skewed to basic and acidic residues; sequence GGRDRNNARNGDDERVR. One can recognise a tr-type G domain in the interval 462–631; sequence PRPPVVTVMG…LLEAEVLELT (170 aa). The interval 471 to 478 is G1; that stretch reads GHVDHGKT. A GTP-binding site is contributed by 471–478; that stretch reads GHVDHGKT. The G2 stretch occupies residues 496 to 500; it reads GITQH. The interval 517-520 is G3; that stretch reads DTPG. GTP contacts are provided by residues 517–521 and 571–574; these read DTPGH and NKID. The segment at 571–574 is G4; that stretch reads NKID. The segment at 607–609 is G5; it reads SAK.

It belongs to the TRAFAC class translation factor GTPase superfamily. Classic translation factor GTPase family. IF-2 subfamily.

It is found in the cytoplasm. One of the essential components for the initiation of protein synthesis. Protects formylmethionyl-tRNA from spontaneous hydrolysis and promotes its binding to the 30S ribosomal subunits. Also involved in the hydrolysis of GTP during the formation of the 70S ribosomal complex. The chain is Translation initiation factor IF-2 from Neisseria meningitidis serogroup C (strain 053442).